We begin with the raw amino-acid sequence, 303 residues long: Putative band 7 family protein R614 (303 aa).

It belongs to the band 7/mec-2 family.

This is Putative band 7 family protein R614 from Acanthamoeba polyphaga (Amoeba).